A 337-amino-acid chain; its full sequence is Diacylglycerol acyltransferase/mycolyltransferase Ag85A (337 aa).

An N-terminal signal peptide occupies residues 1-42 (MKLVDRFRGAATGTSRRLMVGAVGAALLSGLVGFVGGSATAS). 85-86 (MR) is a substrate binding site. The tract at residues 101 to 111 (FEWYYQSGISV) is fibronectin-binding. An intrachain disulfide couples cysteine 130 to cysteine 135. Positions 169 and 197 each coordinate substrate. Catalysis depends on serine 169, which acts as the Nucleophile. The active site involves glutamate 273. Substrate-binding positions include 275 to 278 (FVRT), lysine 282, and 305 to 307 (HSW). Histidine 305 is a catalytic residue.

It belongs to the mycobacterial A85 antigen family. Homodimer.

Its subcellular location is the secreted. It localises to the cell wall. The protein localises to the cytoplasm. It carries out the reaction an acyl-CoA + a 1,2-diacyl-sn-glycerol = a triacyl-sn-glycerol + CoA. The catalysed reaction is 2 alpha,alpha'-trehalose 6-mycolate = alpha,alpha'-trehalose 6,6'-bismycolate + alpha,alpha-trehalose. Functionally, the antigen 85 proteins (FbpA, FbpB, FbpC) are responsible for the high affinity of mycobacteria for fibronectin, a large adhesive glycoprotein, which facilitates the attachment of M.tuberculosis to murine alveolar macrophages (AMs). They also help to maintain the integrity of the cell wall by catalyzing the transfer of mycolic acids to cell wall arabinogalactan, and through the synthesis of alpha,alpha-trehalose dimycolate (TDM, cord factor). They catalyze the transfer of a mycoloyl residue from one molecule of alpha,alpha-trehalose monomycolate (TMM) to another TMM, leading to the formation of TDM. FbpA mediates triacylglycerol (TAG) formation with long-chain acyl-CoA as the acyl donor and 1,2-dipalmitoyl-sn-glycerol (1,2-dipalmitin) as the acyl acceptor. It has a preference for C26:0-CoA over C18:1-CoA. This chain is Diacylglycerol acyltransferase/mycolyltransferase Ag85A (fbpA), found in Mycobacterium ulcerans.